The sequence spans 181 residues: MSRKKKSRKPGAAGAPEFMVTRNRSESDVAGRLRKKDKKRKGLKAGGRNSEEGAQQKHGSSQVRDPRLGSKKKIPLIVEPAKKLTKQERRLSAEQELEMLENDAKLNVLLDRIESGENLGRGLQQYVDEKLDRIEQLMSQLGLLEPEAEEEFEEEAPVRKSRSDDDLLADFEDFDMDDYKG.

Disordered regions lie at residues 1–75 (MSRK…KKIP) and 145–181 (EPEAEEEFEEEAPVRKSRSDDDLLADFEDFDMDDYKG). The span at 32–43 (RLRKKDKKRKGL) shows a compositional bias: basic residues. Residues 146 to 155 (PEAEEEFEEE) show a composition bias toward acidic residues. The segment covering 156–165 (APVRKSRSDD) has biased composition (basic and acidic residues). Over residues 166-181 (DLLADFEDFDMDDYKG) the composition is skewed to acidic residues.

It belongs to the YihI family. As to quaternary structure, interacts with Der.

A GTPase-activating protein (GAP) that modifies Der/EngA GTPase function. May play a role in ribosome biogenesis. This chain is Der GTPase-activating protein YihI, found in Vibrio vulnificus (strain CMCP6).